The primary structure comprises 61 residues: Large ribosomal subunit protein bL32 (61 aa).

Over residues 1–16 the composition is skewed to basic residues; sequence MAVPKRKTSPSKRGMR. The segment at 1–35 is disordered; that stretch reads MAVPKRKTSPSKRGMRRSADGLKSATYVEDKNSGE.

Belongs to the bacterial ribosomal protein bL32 family.

The sequence is that of Large ribosomal subunit protein bL32 from Agrobacterium fabrum (strain C58 / ATCC 33970) (Agrobacterium tumefaciens (strain C58)).